We begin with the raw amino-acid sequence, 141 residues long: Nucleoside diphosphate kinase (141 aa).

ATP is bound by residues Lys11, Phe59, Arg87, Thr93, Arg104, and Asn114. The active-site Pros-phosphohistidine intermediate is the His117.

This sequence belongs to the NDK family. Homotetramer. It depends on Mg(2+) as a cofactor.

It is found in the cytoplasm. The enzyme catalyses a 2'-deoxyribonucleoside 5'-diphosphate + ATP = a 2'-deoxyribonucleoside 5'-triphosphate + ADP. It carries out the reaction a ribonucleoside 5'-diphosphate + ATP = a ribonucleoside 5'-triphosphate + ADP. Major role in the synthesis of nucleoside triphosphates other than ATP. The ATP gamma phosphate is transferred to the NDP beta phosphate via a ping-pong mechanism, using a phosphorylated active-site intermediate. This Burkholderia cenocepacia (strain HI2424) protein is Nucleoside diphosphate kinase.